The chain runs to 441 residues: Homogentisate 1,2-dioxygenase (441 aa).

The active-site Proton acceptor is His287. Residues His330 and Glu336 each contribute to the Fe cation site. Homogentisate is bound by residues Tyr345 and His366. Position 366 (His366) interacts with Fe cation.

It belongs to the homogentisate dioxygenase family. Hexamer; dimer of trimers. Requires Fe cation as cofactor.

It catalyses the reaction homogentisate + O2 = 4-maleylacetoacetate + H(+). It functions in the pathway amino-acid degradation; L-phenylalanine degradation; acetoacetate and fumarate from L-phenylalanine: step 4/6. Functionally, involved in the catabolism of homogentisate (2,5-dihydroxyphenylacetate or 2,5-OH-PhAc), a central intermediate in the degradation of phenylalanine and tyrosine. Catalyzes the oxidative ring cleavage of the aromatic ring of homogentisate to yield maleylacetoacetate. In Xanthomonas oryzae pv. oryzae (strain KACC10331 / KXO85), this protein is Homogentisate 1,2-dioxygenase.